The following is an 882-amino-acid chain: MRVLGFLSSHAGTGTAAAHTRWRWLAPLGIQAIRPASASAGGNAVSSATPQAPPCPIHANVGVGRASALGPGPSGFMAPSAGIVTAIRDGPNSNSRCSTVRTHATRSKSTGPSRATSSGPATAAPPRRRRRTSNDTQDGGLTSEQTPTNTAVAAVAATAAAAAGASASAAAPALPVALNPTWRTPPTAEAARRITQAASASAAYSGSSAAAAAAAVAAGPSSAASVARGGSAAAARSAAASALAANANTSSGAASAAAIAATASTAPGKLLLGGDLSRALAAAGSTTAPPLPLPSRAGLSAPKHTASAAAAAAAAASVLPASTPAAASQTPPTTVTSCGTGSGAPATPRAARSPTAAVSVSSADAAAAAAAAAAPASAAATAAAAVLPTRHIVAAVDPDLNGALALIYWDEDPNDPTTATASGPAAATTDAAAAAAAAAAAATGPAARLATLAAAAPPGSGAAAAADEAAAAALLWLPTPPRPPADASRWRVCVWDMPVSAAERQKRTASGQVARRRLLHVAGARAVLSAALAAALPPPGEARPVALYGYVEVPPILPGDGNIAAYTSLWSTGSWLGLLTGMGFTVGSTPVRRWKTDLGLYGAKGKDASLALARALFPGQQPILRHKKNHGRADALLIAAWALGACLPRGLGASLRRNGITLDQLLQQQPGTTVGLVWGPPRPPAPTDAYGNLLTPEQDMWDEIEAAETKVERKAQARSSTARRRKTAGTQEEPEAQAEEEQAEAGTGVVAAAAGAAAPKRRRAKKAAVESGSEAAVAEVAAGPQEEGSEGEVAGQGGRACRSKSRSKSSGKSSSKAEAGGAGSGRRRAASVGSSSVGSSSVGSSSGGGGGGGGGVKAPGASRRRGGAKAGSDGGVSGSESE.

Disordered stretches follow at residues 87 to 148 and 323 to 351; these read IRDG…QTPT and TPAA…PRAA. Polar residues predominate over residues 91–111; that stretch reads PNSNSRCSTVRTHATRSKSTG. Low complexity predominate over residues 112 to 125; the sequence is PSRATSSGPATAAP. Residues 134–148 show a composition bias toward polar residues; it reads NDTQDGGLTSEQTPT. A compositionally biased stretch (low complexity) spans 323 to 337; that stretch reads TPAAASQTPPTTVTS. Mg(2+)-binding residues include Asp397, Glu552, Asn629, and Asp634. The segment at 710–882 is disordered; it reads KVERKAQARS…DGGVSGSESE (173 aa). A compositionally biased stretch (acidic residues) spans 732-743; that stretch reads EEPEAQAEEEQA. Low complexity-rich tracts occupy residues 744–758, 769–783, 810–819, and 830–844; these read EAGT…GAAA, VESG…VAAG, SGKSSSKAEA, and ASVG…SVGS. 2 stretches are compositionally biased toward gly residues: residues 845 to 857 and 868 to 882; these read SSGG…GGVK and AKAG…SESE.

The cofactor is Mg(2+). It depends on Mn(2+) as a cofactor.

It localises to the plastid. The protein localises to the chloroplast. It catalyses the reaction Endonucleolytic cleavage at a junction such as a reciprocal single-stranded crossover between two homologous DNA duplexes (Holliday junction).. A structure-specific endonuclease that resolves Holliday junction (HJ) intermediates during genetic recombination. Cleaves 4-way DNA junctions introducing paired nicks in opposing strands, leaving a 5'-terminal phosphate and a 3'-terminal hydroxyl group that are ligated to produce recombinant products. Mediates chloroplast nucleoid segregation during chloroplast division. The sequence is that of Holliday junction resolvase MOC1, chloroplastic from Chlamydomonas reinhardtii (Chlamydomonas smithii).